The chain runs to 962 residues: IQ motif and SEC7 domain-containing protein 1 (962 aa).

The tract at residues 1–96 (MACRRRYLSS…STSVLRKQAE (96 aa)) is disordered. Residues 8 to 19 (LSSLETGSSLST) show a composition bias toward low complexity. A compositionally biased stretch (polar residues) spans 30-39 (SSETGTSLDS). S89, S105, and S107 each carry phosphoserine. Residues 134–163 (TRHAARTIQTAFRQYQMNKNFERLRSSMSE) form the IQ domain. 3 positions are modified to phosphoserine: S180, S248, and S252. Disordered stretches follow at residues 264–292 (SEEVPASDTARARDTEPKPGLHGMDHRKL), 311–333 (LSPPLPLSQAGDRPSSTESDLRL), and 348–516 (KEDK…DSPA). Positions 273–292 (ARARDTEPKPGLHGMDHRKL) are enriched in basic and acidic residues. Composition is skewed to basic and acidic residues over residues 365-375 (ERPEPRLRVEH) and 429-445 (LPREEPELRPRPPRPLE). A compositionally biased stretch (low complexity) spans 470–488 (DSINSTSNSNDTINCSSES). Residues S511 and S514 each carry the phosphoserine modification. An SEC7 domain is found at 516-709 (AFSNDVIRKR…IGIYERIRKR (194 aa)). Positions 773–865 (HQREIFLFND…LRESVAEVQE (93 aa)) constitute a PH domain. S891 carries the phosphoserine modification. Y910 is modified (phosphotyrosine). The disordered stretch occupies residues 921 to 962 (LSSSLRDLSEAGKRGRRSSAGSLESNVEFQPFQPSQPPVLCS). Phosphoserine is present on residues S923 and S924. Positions 939-948 (SAGSLESNVE) are enriched in polar residues.

The protein belongs to the BRAG family. As to quaternary structure, interacts with ARF1 and ARF6. Interacts with GRIA2; the interaction is required for ARF6 activation.

It localises to the cytoplasm. Its subcellular location is the nucleus. It is found in the postsynaptic density. The protein resides in the cytoplasmic vesicle. The protein localises to the secretory vesicle. It localises to the synaptic vesicle. In terms of biological role, guanine nucleotide exchange factor for ARF1 and ARF6. Guanine nucleotide exchange factor activity is enhanced by lipid binding. Accelerates GTP binding by ARFs of all three classes. Guanine nucleotide exchange protein for ARF6, mediating internalization of beta-1 integrin. Involved in neuronal development. In neurons, plays a role in the control of vesicle formation by endocytoc cargo. Upon long term depression, interacts with GRIA2 and mediates the activation of ARF6 to internalize synaptic AMPAR receptors. This chain is IQ motif and SEC7 domain-containing protein 1, found in Rattus norvegicus (Rat).